The following is an 811-amino-acid chain: Serine/threonine-protein kinase prpf4B (811 aa).

Disordered stretches follow at residues 1–257 (MVIE…TNEP), 288–341 (EKYN…NQIE), 353–379 (KDQN…EDLK), and 408–452 (VSIK…TNGG). Low complexity predominate over residues 46 to 71 (SSPASRETSSSKLMSPSKNQSSSSSR). The segment covering 81 to 202 (RRKDERYSSS…DNMDSRDNKN (122 aa)) has biased composition (basic and acidic residues). Residues 203 to 215 (GSRQSINNNTLSY) are compositionally biased toward polar residues. Basic and acidic residues predominate over residues 217-240 (KQADRKDEVRVKDNISVNDDKTNH). Polar residues-rich tracts occupy residues 241–257 (GENL…TNEP) and 293–302 (EQPQPITSSL). The span at 310–327 (SNTNTNSNSTPVATTTTS) shows a compositional bias: low complexity. In terms of domain architecture, Protein kinase spans 490 to 808 (YQIFSPIGSG…PFEALNHEFL (319 aa)). Residues 496 to 504 (IGSGVFSTV) and lysine 519 contribute to the ATP site. Residue aspartate 619 is the Proton acceptor of the active site.

This sequence belongs to the protein kinase superfamily. CMGC Ser/Thr protein kinase family. Post-translationally, phosphorylated. Autophosphorylated; phosphorylation inhibits interaction with its targets.

It localises to the nucleus. Its subcellular location is the chromosome. The protein resides in the centromere. The protein localises to the kinetochore. The enzyme catalyses L-seryl-[protein] + ATP = O-phospho-L-seryl-[protein] + ADP + H(+). The catalysed reaction is L-threonyl-[protein] + ATP = O-phospho-L-threonyl-[protein] + ADP + H(+). In terms of biological role, serine/threonine kinase involved in spliceosomal assembly as well as mitosis and signaling regulation. The chain is Serine/threonine-protein kinase prpf4B (prp4k) from Dictyostelium discoideum (Social amoeba).